We begin with the raw amino-acid sequence, 130 residues long: Small ribosomal subunit protein uS11c (130 aa).

This sequence belongs to the universal ribosomal protein uS11 family. In terms of assembly, part of the 30S ribosomal subunit.

The protein localises to the plastid. It localises to the cyanelle. This chain is Small ribosomal subunit protein uS11c, found in Cyanophora paradoxa.